A 266-amino-acid polypeptide reads, in one-letter code: Glutamate racemase (266 aa).

Residues 9–10 (DS) and 41–42 (YG) each bind substrate. The active-site Proton donor/acceptor is Cys-72. 73–74 (NT) contacts substrate. Catalysis depends on Cys-184, which acts as the Proton donor/acceptor. 185–186 (TH) contributes to the substrate binding site.

Belongs to the aspartate/glutamate racemases family.

It carries out the reaction L-glutamate = D-glutamate. It functions in the pathway cell wall biogenesis; peptidoglycan biosynthesis. Provides the (R)-glutamate required for cell wall biosynthesis. This Staphylococcus aureus (strain bovine RF122 / ET3-1) protein is Glutamate racemase.